The chain runs to 120 residues: Large ribosomal subunit protein bL19 (120 aa).

The protein belongs to the bacterial ribosomal protein bL19 family.

In terms of biological role, this protein is located at the 30S-50S ribosomal subunit interface and may play a role in the structure and function of the aminoacyl-tRNA binding site. The sequence is that of Large ribosomal subunit protein bL19 from Gloeothece citriformis (strain PCC 7424) (Cyanothece sp. (strain PCC 7424)).